The primary structure comprises 145 residues: Cuticle protein 7 (145 aa).

One can recognise a Chitin-binding type R&amp;R domain in the interval 41–114; the sequence is PVNVATSYHA…VASNALPVGP (74 aa).

This Blaberus craniifer (Death's head cockroach) protein is Cuticle protein 7.